The chain runs to 59 residues: UPF0434 protein RHOS4_00640 (59 aa).

It belongs to the UPF0434 family.

This Cereibacter sphaeroides (strain ATCC 17023 / DSM 158 / JCM 6121 / CCUG 31486 / LMG 2827 / NBRC 12203 / NCIMB 8253 / ATH 2.4.1.) (Rhodobacter sphaeroides) protein is UPF0434 protein RHOS4_00640.